The sequence spans 413 residues: DNA polymerase IV 1 (413 aa).

The UmuC domain occupies 7 to 188 (IFHVDMNSFY…LPIEEMYGIG (182 aa)). The Mg(2+) site is built by Asp11 and Asp107. Glu108 is a catalytic residue.

Belongs to the DNA polymerase type-Y family. In terms of assembly, monomer. Mg(2+) serves as cofactor.

The protein resides in the cytoplasm. The enzyme catalyses DNA(n) + a 2'-deoxyribonucleoside 5'-triphosphate = DNA(n+1) + diphosphate. In terms of biological role, poorly processive, error-prone DNA polymerase involved in untargeted mutagenesis. Copies undamaged DNA at stalled replication forks, which arise in vivo from mismatched or misaligned primer ends. These misaligned primers can be extended by PolIV. Exhibits no 3'-5' exonuclease (proofreading) activity. May be involved in translesional synthesis, in conjunction with the beta clamp from PolIII. The sequence is that of DNA polymerase IV 1 (dinB1) from Halalkalibacterium halodurans (strain ATCC BAA-125 / DSM 18197 / FERM 7344 / JCM 9153 / C-125) (Bacillus halodurans).